A 320-amino-acid chain; its full sequence is NAD-dependent protein deacylase SIR2rp2 (320 aa).

Residues 1–22 (MRPAGTLASFLERCSARKRGRG) constitute a mitochondrion transit peptide. The Deacetylase sirtuin-type domain occupies 23–320 (CVVLTGAGCS…MFFRRKTIQL (298 aa)). NAD(+) contacts are provided by residues 28–48 (GAGCSTESGIPDYRGPNGQYH) and 108–111 (QNVD). Histidine 144 acts as the Proton acceptor in catalysis. Zn(2+) contacts are provided by cysteine 152, cysteine 155, cysteine 207, and cysteine 210. Residues 248–250 (GTS), 274–276 (NAG), and glycine 294 contribute to the NAD(+) site.

Belongs to the sirtuin family. Class II subfamily. Zn(2+) serves as cofactor.

The protein resides in the mitochondrion matrix. The enzyme catalyses N(6)-acetyl-L-lysyl-[protein] + NAD(+) + H2O = 2''-O-acetyl-ADP-D-ribose + nicotinamide + L-lysyl-[protein]. NAD-dependent protein deacylase. Catalyzes the NAD-dependent hydrolysis of acyl groups from lysine residues. This chain is NAD-dependent protein deacylase SIR2rp2 (SIR2rp2), found in Leishmania major.